A 614-amino-acid chain; its full sequence is Lamin-2 (614 aa).

Residues 1–10 (MSAQVSKKRG) are compositionally biased toward basic residues. A disordered region spans residues 1-51 (MSAQVSKKRGGSNPPKTGQHAASSTTSRTESSATSQTIYERQEVETRTQRT). Residues 1 to 76 (MSAQVSKKRG…GTAGLAGSPL (76 aa)) are head. Residues 21–37 (AASSTTSRTESSATSQT) are compositionally biased toward low complexity. The coil 1A stretch occupies residues 77–117 (SRHQEKEEFKLLNNRFANYIDTIRAQQEEISVLRRKVETVS). One can recognise an IF rod domain in the interval 81–433 (EKEEFKLLNN…ALLRTEEERL (353 aa)). The linker 1 stretch occupies residues 118 to 128 (SKEVVENQKIK). The tract at residues 129-268 (ERYNLEIANL…EEIVSLRNQR (140 aa)) is coil 1B. The tract at residues 269–286 (RTEITEVETRMGEEYQSK) is linker 2. Residues 287–426 (IVEQLNDLRA…AELATYNALL (140 aa)) form a coil 2 region. Residues 427–611 (RTEEERLNMK…ADSSDHQKNC (185 aa)) are tail. Residues 433–454 (LNMKSPPFPSTPDSQRRGTKRR) are disordered. Residues 449–458 (RGTKRRIADS) carry the Nuclear localization signal motif. The region spanning 462–581 (TRFRNEASAT…VARREMTQSS (120 aa)) is the LTD domain. A lipid anchor (S-farnesyl cysteine) is attached at cysteine 611. Positions 612 to 614 (VIM) are cleaved as a propeptide — removed in mature form.

The protein belongs to the intermediate filament family.

The protein localises to the nucleus inner membrane. Its function is as follows. Intermediate filament (IF) protein, component of the nuclear lamina, a fibrous layer on the nucleoplasmic side of the inner nuclear membrane, which is thought to provide a framework for the nuclear envelope. The protein is Lamin-2 of Hypsibius exemplaris (Freshwater tardigrade).